Reading from the N-terminus, the 150-residue chain is MSDNAKTSATDIVQRIISLLTIILLAYFLFKEGLFSVDQRLLSLATIVLLASFLFIIFLVLFKWPLGNLNKKEIRRTIAIVTTSFYFGTLSMVLSGKLELTEEVGALIDGLKWAFMVVVAFYFGSRAVEDALKSKKSAEECPQNTDAEAG.

Helical transmembrane passes span 12–30, 40–62, 74–96, and 106–128; these read IVQRIISLLTIILLAYFLF, RLLSLATIVLLASFLFIIFLVLF, IRRTIAIVTTSFYFGTLSMVLSG, and ALIDGLKWAFMVVVAFYFGSRAV.

The protein localises to the cell membrane. This is an uncharacterized protein from Archaeoglobus fulgidus (strain ATCC 49558 / DSM 4304 / JCM 9628 / NBRC 100126 / VC-16).